Reading from the N-terminus, the 900-residue chain is Probable dipeptidyl-aminopeptidase B (900 aa).

The interval 1–83 (MARTDQGLGA…DILSHPRDKS (83 aa)) is disordered. Over 1–90 (MARTDQGLGA…DKSKRSRGSR (90 aa)) the chain is Cytoplasmic. The segment covering 24–39 (NSFSSTDSLSTDGSLF) has biased composition (low complexity). Polar residues predominate over residues 44–55 (NATQFQKSTQLP). Residues 91–111 (WIWVIGLLCLGGWILAFILFW) form a helical; Signal-anchor for type II membrane protein membrane-spanning segment. The Vacuolar portion of the chain corresponds to 112 to 900 (GRRNNNSDIS…HHVGSALAAT (789 aa)). N150, N195, N348, N410, N514, N639, and N644 each carry an N-linked (GlcNAc...) asparagine glycan. S753 serves as the catalytic Charge relay system. A glycan (N-linked (GlcNAc...) asparagine) is linked at N812. Residues D830 and H863 each act as charge relay system in the active site.

It belongs to the peptidase S9B family.

The protein localises to the vacuole membrane. The catalysed reaction is Release of an N-terminal dipeptide, Xaa-Yaa-|-Zaa-, from a polypeptide, preferentially when Yaa is Pro, provided Zaa is neither Pro nor hydroxyproline.. Type IV dipeptidyl-peptidase which removes N-terminal dipeptides sequentially from polypeptides having unsubstituted N-termini provided that the penultimate residue is proline. The chain is Probable dipeptidyl-aminopeptidase B (dapB) from Talaromyces stipitatus (strain ATCC 10500 / CBS 375.48 / QM 6759 / NRRL 1006) (Penicillium stipitatum).